Consider the following 164-residue polypeptide: Putative pre-16S rRNA nuclease (164 aa).

Belongs to the YqgF nuclease family.

The protein localises to the cytoplasm. Functionally, could be a nuclease involved in processing of the 5'-end of pre-16S rRNA. The chain is Putative pre-16S rRNA nuclease from Caulobacter sp. (strain K31).